We begin with the raw amino-acid sequence, 352 residues long: Galactokinase (352 aa).

A substrate-binding site is contributed by 14-17 (EHTD). ATP contacts are provided by residues S46 and 96-102 (GAGLSSS). Mg(2+)-binding residues include S102 and E134. The active-site Proton acceptor is the D146. Y196 contacts substrate.

The protein belongs to the GHMP kinase family. GalK subfamily.

It localises to the cytoplasm. It catalyses the reaction alpha-D-galactose + ATP = alpha-D-galactose 1-phosphate + ADP + H(+). It functions in the pathway carbohydrate metabolism; galactose metabolism. In terms of biological role, catalyzes the transfer of the gamma-phosphate of ATP to D-galactose to form alpha-D-galactose-1-phosphate (Gal-1-P). This is Galactokinase from Thermosipho africanus (strain TCF52B).